Consider the following 767-residue polypeptide: Transferrin receptor protein 1 (767 aa).

At 1 to 67 (MDQARSAFSN…LTKPKRFNGS (67 aa)) the chain is on the cytoplasmic side. Phosphoserine is present on residues serine 9 and serine 18. Tyrosine 19 carries the post-translational modification Phosphotyrosine. The Endocytosis signal signature appears at 19 to 22 (YTRF). At threonine 20 the chain carries Phosphothreonine. Serine 23 carries the post-translational modification Phosphoserine. A Stop-transfer sequence motif is present at residues 60–63 (KPKR). Residues 68 to 88 (FCYAVIAVIIFFLIGFMIGYL) form a helical; Signal-anchor for type II membrane protein membrane-spanning segment. Cysteine 69 carries the S-palmitoyl cysteine lipid modification. Residues 89–767 (GYCKRVEPKS…GDIWDIDNEF (679 aa)) are Extracellular-facing. Basic and acidic residues predominate over residues 96-110 (PKSECGRSGDSKEIE). The interval 96–122 (PKSECGRSGDSKEIEGTEPPETEEYFP) is disordered. Positions 111-121 (GTEPPETEEYF) are enriched in acidic residues. N-linked (GlcNAc...) asparagine glycans are attached at residues asparagine 211, asparagine 258, and asparagine 324. One can recognise a PA domain in the interval 230–320 (SKATTVTGKL…GTGDPYTPGF (91 aa)). A ligand-binding region spans residues 576-767 (TMDTYEVLSQ…GDIWDIDNEF (192 aa)). The Cell attachment site signature appears at 653–655 (RGD). A glycan (N-linked (GlcNAc...) asparagine) is linked at asparagine 734.

This sequence belongs to the peptidase M28 family. M28B subfamily. In terms of assembly, homodimer; disulfide-linked. Binds one transferrin or HFE molecule per subunit. Interacts with SH3BP4. Interacts with STEAP3; facilitates TFRC endocytosis in erythroid precursor cells. In terms of processing, stearoylated by ZDHHC6 which inhibits TFRC-mediated activation of the JNK pathway and promotes mitochondrial fragmentation. Stearoylation does not affect iron uptake.

It is found in the cell membrane. The protein resides in the melanosome. Functionally, cellular uptake of iron occurs via receptor-mediated endocytosis of ligand-occupied transferrin receptor into specialized endosomes. Endosomal acidification leads to iron release. The apotransferrin-receptor complex is then recycled to the cell surface with a return to neutral pH and the concomitant loss of affinity of apotransferrin for its receptor. Transferrin receptor is necessary for development of erythrocytes and the nervous system. Positively regulates T and B cell proliferation through iron uptake. Acts as a lipid sensor that regulates mitochondrial fusion by regulating activation of the JNK pathway. When dietary levels of stearate (C18:0) are low, promotes activation of the JNK pathway, resulting in HUWE1-mediated ubiquitination and subsequent degradation of the mitofusin MFN2 and inhibition of mitochondrial fusion. When dietary levels of stearate (C18:0) are high, TFRC stearoylation inhibits activation of the JNK pathway and thus degradation of the mitofusin MFN2. Mediates uptake of NICOL1 into fibroblasts where it may regulate extracellular matrix production. This is Transferrin receptor protein 1 (TFRC) from Equus caballus (Horse).